The chain runs to 528 residues: Ecdysteroid UDP-glucosyltransferase (528 aa).

The first 32 residues, 1 to 32 (MGHLHIVHWRLTMNGAIAALFLCLVMVHQQHA), serve as a signal peptide directing secretion.

Belongs to the UDP-glycosyltransferase family.

Functionally, catalyzes the transfer of glucose from UDP-glucose to ecdysteroids which are insect molting hormones. Expression of egt interferes with normal insect development and block molting. The sequence is that of Ecdysteroid UDP-glucosyltransferase (EGT) from Mamestra brassicae nuclear polyhedrosis virus (MbNPV).